The chain runs to 3206 residues: Highly reducing polyketide synthase ltbA (3206 aa).

Positions 5–434 (PAPIAIIGVG…GTNCHVILEA (430 aa)) constitute a Ketosynthase family 3 (KS3) domain. Active-site for beta-ketoacyl synthase activity residues include cysteine 179, histidine 314, and histidine 354. Residues 441-463 (PTGTNGIKTNGTRINGIKTNGAD) are compositionally biased toward polar residues. Residues 441-472 (PTGTNGIKTNGTRINGIKTNGADTNERESMKN) form a disordered region. The tract at residues 575–890 (VFSGQGAQWH…EYLSALQRNT (316 aa)) is malonyl-CoA:ACP transacylase (MAT) domain. An N-terminal hotdog fold region spans residues 958-1098 (HDLLGLFDPA…GEITVEYETD (141 aa)). The segment at 958 to 1278 (HDLLGLFDPA…LLVNLRAIGE (321 aa)) is dehydratase (DH) domain. Positions 958-1284 (HDLLGLFDPA…AIGETREDED (327 aa)) constitute a PKS/mFAS DH domain. The active-site Proton acceptor; for dehydratase activity is the histidine 990. The segment at 1128-1284 (DTDMTKSEFY…AIGETREDED (157 aa)) is C-terminal hotdog fold. The active-site Proton donor; for dehydratase activity is aspartate 1193. Residues 1450-1640 (ESGILVGPYE…LARNGFGGIH (191 aa)) are methyltransferase (CMet) domain. Residues 1871–2185 (LLSSLRFVDD…RKHTGKVVLQ (315 aa)) form an enoyl reductase (ER) domain region. Residues 2208–2395 (GTYVAAGGLG…SVDAHGALKE (188 aa)) form a ketoreductase (KR) domain region. In terms of domain architecture, Carrier spans 2499–2577 (EEAEQLIRDA…ALAATVASRS (79 aa)). Residue serine 2537 is modified to O-(pantetheine 4'-phosphoryl)serine. A disordered region spans residues 2584–2611 (IRHSSRLQEATTQAENKDAPKNEKEGPS). Positions 2598–2610 (ENKDAPKNEKEGP) are enriched in basic and acidic residues. The tract at residues 2994 to 3206 (HLIPSFGKAV…IKTIIQAGQE (213 aa)) is carnitine O-acyltransferase (cAT) domain.

Pantetheine 4'-phosphate is required as a cofactor.

It functions in the pathway secondary metabolite biosynthesis. In terms of biological role, highly reducing polyketide synthase; part of the gene cluster that mediates the biosynthesis of luteodienoside A, a glycosylated polyketide consisting of an unusual 1-O-beta-D-glucopyranosyl-myo-inositol (glucinol) ester of 3-hydroxy-2,2,4-trimethylocta-4,6-dienoic acid. LtbA produces the trimethylated polyketide chain from acetyl-CoA, malonyl-CoA and S-adenosylmethionine (SAM). The ltbA carnitine O-acyltransferase (cAT) domain then uses glucinol produced by the glycosyltransferase ltbB as an offloading substrate to release luteodienoside A. Furthermore, the PKS C-methyltransferase (CMeT) domain is capable of catalysing gem-dimethylation of the 3-hydroxy-2,2,4-trimethylocta-4,6-dienoic acid intermediate, without requiring reversible product release and recapture by the cAT domain. Since ltbA and ltbB are sufficient for the biosynthesis of luteodienoside A, the functions of the methyltransferase ltbC and the FAD-binding monooxygenase ltbD within the pathway remain obscur. This chain is Highly reducing polyketide synthase ltbA, found in Aspergillus luteorubrus.